We begin with the raw amino-acid sequence, 299 residues long: Tyrosine recombinase XerC (299 aa).

The Core-binding (CB) domain maps to 1-85; it reads MEQHLDAYCM…AVRGFYKYLN (85 aa). The Tyr recombinase domain maps to 106-285; the sequence is RLPKTLDTDR…DFQHLATVYD (180 aa). Residues Arg146, Lys170, His237, Arg240, and His263 contribute to the active site. Residue Tyr272 is the O-(3'-phospho-DNA)-tyrosine intermediate of the active site.

It belongs to the 'phage' integrase family. XerC subfamily. As to quaternary structure, forms a cyclic heterotetrameric complex composed of two molecules of XerC and two molecules of XerD.

The protein resides in the cytoplasm. Functionally, site-specific tyrosine recombinase, which acts by catalyzing the cutting and rejoining of the recombining DNA molecules. The XerC-XerD complex is essential to convert dimers of the bacterial chromosome into monomers to permit their segregation at cell division. It also contributes to the segregational stability of plasmids. This Pseudomonas syringae pv. tomato (strain ATCC BAA-871 / DC3000) protein is Tyrosine recombinase XerC.